Here is a 196-residue protein sequence, read N- to C-terminus: DnaA initiator-associating protein DiaA (196 aa).

Residues 34–196 (LVQSLLNGNK…DSTLFPHQDE (163 aa)) enclose the SIS domain.

Belongs to the SIS family. DiaA subfamily. Homotetramer; dimer of dimers.

In terms of biological role, required for the timely initiation of chromosomal replication via direct interactions with the DnaA initiator protein. The polypeptide is DnaA initiator-associating protein DiaA (Serratia proteamaculans (strain 568)).